Here is a 48-residue protein sequence, read N- to C-terminus: MQHCILILAWGKCILKAKFFLPLLPVRFVLGDPEDNAGTQTGDPARGR.

This chain is Probable protein E5A, found in Bos taurus papillomavirus 4 (Bovine papillomavirus 4).